Consider the following 668-residue polypeptide: MTSTPFRIHAPFEPTGDQPQAIQKLVAGVQAGHRFQTLLGATGTGKTHTIARVIEALGRPTLVLAHNKTLAAQLCNELRSFFPENAVEYFISYYDYYQPEAYIPVTDTYIEKSASINEEIDMLRHSATRSLFERRDVIVVASISCIYGLGIPAEYLKAAIPLEVGRETELRQLLRQLATIQYTRNDVELGRGRFRVRGDVLEIGPAYEDRIIRVEFFGDEIEAIRYVDPLTGETLQSVERLNIYPAKHFVTPAERLEAACVAIEAELQAQVANLEAQNKLLEAQRLSQRTRYDLEMLRQVGYCNGVENYSRHLAGRAAGEPPECLIDYFPENWLLVVDESHVTVPQIRGMYNGDQARKKVLIDHGFRLPSAADNRPLKPEEFWQKVQQCIFVSATPGDWELAVSTQVVEQIIRPTGVVDPEIFVRPTQGQVDDLYGEIRLRCDRQERVLVTTLTKRMAEDLTEYFQERGVRVRYLHSEINAIERIEILEALRQGDFDVLIGVNLLREGLDLPEVSLVAILDADKEGFLRAERSLIQTIGRAARHVRGQAILYADTLTESMQKAIQETERRRAIQLAYNQAHGIIPQPIVKKTSNAILAFLDVSRRLNAESVPVLSSQTLQDLSLEDIPPLIQDLEAKMKAAAQELAFEEAARYRDQIKRLRDRLVGHP.

Residues 27-413 form the Helicase ATP-binding domain; that stretch reads AGVQAGHRFQ…STQVVEQIIR (387 aa). ATP is bound at residue 40 to 47; the sequence is GATGTGKT. Positions 93-116 match the Beta-hairpin motif; sequence YYDYYQPEAYIPVTDTYIEKSASI. The Helicase C-terminal domain occupies 430–596; sequence QVDDLYGEIR…PIVKKTSNAI (167 aa). The UVR domain maps to 628 to 663; it reads PPLIQDLEAKMKAAAQELAFEEAARYRDQIKRLRDR.

The protein belongs to the UvrB family. As to quaternary structure, forms a heterotetramer with UvrA during the search for lesions. Interacts with UvrC in an incision complex.

The protein localises to the cytoplasm. Functionally, the UvrABC repair system catalyzes the recognition and processing of DNA lesions. A damage recognition complex composed of 2 UvrA and 2 UvrB subunits scans DNA for abnormalities. Upon binding of the UvrA(2)B(2) complex to a putative damaged site, the DNA wraps around one UvrB monomer. DNA wrap is dependent on ATP binding by UvrB and probably causes local melting of the DNA helix, facilitating insertion of UvrB beta-hairpin between the DNA strands. Then UvrB probes one DNA strand for the presence of a lesion. If a lesion is found the UvrA subunits dissociate and the UvrB-DNA preincision complex is formed. This complex is subsequently bound by UvrC and the second UvrB is released. If no lesion is found, the DNA wraps around the other UvrB subunit that will check the other stand for damage. This Thermosynechococcus vestitus (strain NIES-2133 / IAM M-273 / BP-1) protein is UvrABC system protein B.